Reading from the N-terminus, the 158-residue chain is MIDHDKLPYRPCAGVMLANRDGRVFVGQRLDTSSEAWQMPQGGIDEGEDAEKAAIRELGEETGIHGGLVDIIARSREEYFYDLPDHLIGKMWGGKYRGQRQHWFLMRFMGEDSDIDIHTRHQEFRAWRWVDLGEIEKLIVPFKRALYRGLIEEFGPLV.

The 145-residue stretch at 8–152 (PYRPCAGVML…KRALYRGLIE (145 aa)) folds into the Nudix hydrolase domain. The Nudix box motif lies at 42-63 (GGIDEGEDAEKAAIRELGEETG).

It belongs to the Nudix hydrolase family. RppH subfamily. It depends on a divalent metal cation as a cofactor.

Accelerates the degradation of transcripts by removing pyrophosphate from the 5'-end of triphosphorylated RNA, leading to a more labile monophosphorylated state that can stimulate subsequent ribonuclease cleavage. This Sphingopyxis alaskensis (strain DSM 13593 / LMG 18877 / RB2256) (Sphingomonas alaskensis) protein is RNA pyrophosphohydrolase.